The sequence spans 107 residues: uncharacterized protein (107 aa).

Residues 37–59 (MVFSFLTVMPGDFIKCLFLRFFV) form a helical membrane-spanning segment.

Its subcellular location is the membrane. This is an uncharacterized protein from Saccharomyces cerevisiae (strain ATCC 204508 / S288c) (Baker's yeast).